Reading from the N-terminus, the 449-residue chain is Phosphoglucosamine mutase (449 aa).

The active-site Phosphoserine intermediate is Ser-100. Residues Ser-100, Asp-241, Asp-243, and Asp-245 each contribute to the Mg(2+) site. Ser-100 is subject to Phosphoserine.

This sequence belongs to the phosphohexose mutase family. Mg(2+) serves as cofactor. Activated by phosphorylation.

The enzyme catalyses alpha-D-glucosamine 1-phosphate = D-glucosamine 6-phosphate. In terms of biological role, catalyzes the conversion of glucosamine-6-phosphate to glucosamine-1-phosphate. In Clostridium botulinum (strain Langeland / NCTC 10281 / Type F), this protein is Phosphoglucosamine mutase.